A 449-amino-acid polypeptide reads, in one-letter code: Tubulin alpha chain (449 aa).

Glutamine 11 contributes to the GTP binding site. N6-acetyllysine is present on lysine 40. GTP is bound by residues glutamate 71, serine 140, glycine 144, threonine 145, threonine 179, asparagine 206, and asparagine 228. Glutamate 71 is a Mg(2+) binding site. Residue glutamate 254 is part of the active site.

Belongs to the tubulin family. As to quaternary structure, dimer of alpha and beta chains. A typical microtubule is a hollow water-filled tube with an outer diameter of 25 nm and an inner diameter of 15 nM. Alpha-beta heterodimers associate head-to-tail to form protofilaments running lengthwise along the microtubule wall with the beta-tubulin subunit facing the microtubule plus end conferring a structural polarity. Microtubules usually have 13 protofilaments but different protofilament numbers can be found in some organisms and specialized cells. Mg(2+) serves as cofactor. In terms of processing, undergoes a tyrosination/detyrosination cycle, the cyclic removal and re-addition of a C-terminal tyrosine residue by the enzymes tubulin tyrosine carboxypeptidase (TTCP) and tubulin tyrosine ligase (TTL), respectively. Post-translationally, some glutamate residues at the C-terminus are either polyglutamylated or polyglycylated. These 2 modifications occur exclusively on glutamate residues and result in either polyglutamate or polyglycine chains on the gamma-carboxyl group. Both modifications can coexist on the same protein on adjacent residues, and lowering polyglycylation levels increases polyglutamylation, and reciprocally. The precise function of such modifications is still unclear but they regulate the assembly and dynamics of axonemal microtubules. Acetylation of alpha chains at Lys-40 stabilizes microtubules and affects affinity and processivity of microtubule motors. This modification has a role in multiple cellular functions, ranging from cell motility, cell cycle progression or cell differentiation to intracellular trafficking and signaling.

It localises to the cytoplasm. It is found in the cytoskeleton. It catalyses the reaction GTP + H2O = GDP + phosphate + H(+). Tubulin is the major constituent of microtubules, a cylinder consisting of laterally associated linear protofilaments composed of alpha- and beta-tubulin heterodimers. Microtubules grow by the addition of GTP-tubulin dimers to the microtubule end, where a stabilizing cap forms. Below the cap, tubulin dimers are in GDP-bound state, owing to GTPase activity of alpha-tubulin. The protein is Tubulin alpha chain of Tetrahymena thermophila.